The following is a 578-amino-acid chain: SCARECROW-LIKE protein 7 (578 aa).

Over residues 18–29 (VIQQQQQQQQQQ) the composition is skewed to low complexity. Disordered stretches follow at residues 18–84 (VIQQ…LAYG) and 146–173 (PPPPVPSPPPTHAAATATATAATAAPRP). The span at 49-61 (PHHHQQKHHHHHQ) shows a compositional bias: basic residues. Low complexity predominate over residues 62-74 (QMPAMPQAPPSSH). The span at 146–156 (PPPPVPSPPPT) shows a compositional bias: pro residues. A compositionally biased stretch (low complexity) spans 157–173 (HAAATATATAATAAPRP). Residues 198-578 (SADASCSAPI…RPLLTVSAWR (381 aa)) enclose the GRAS domain. Positions 205 to 264 (APILQSLLSCSRAAATDPGLAAAELASVRAAATDAGDPSERLAFYFADALSRRLACGTGA) are leucine repeat I (LRI). The interval 283–349 (YKTLNDACPY…GKPTRIRITG (67 aa)) is VHIID. Positions 314-318 (IHIVD) match the VHIID motif. Residues 365 to 397 (ATNTRLRDFAKLLGVDFEFVPLLRPVHELNKSD) are leucine repeat II (LRII). Residues 406–497 (VAVNFMLQLY…RWMFGERIQR (92 aa)) are PFYRE. The LXXLL motif signature appears at 414-418 (LYHLL). Positions 500 to 578 (GPEEGADRTE…RPLLTVSAWR (79 aa)) are SAW.

It belongs to the GRAS family. In terms of assembly, homodimer.

The protein resides in the nucleus. In terms of biological role, probable transcription factor involved in plant development. Involved in environmental abiotic stress resistance. May increase the expression of stress-responsive genes. Binds DNA in vitro. This Oryza sativa subsp. japonica (Rice) protein is SCARECROW-LIKE protein 7.